We begin with the raw amino-acid sequence, 488 residues long: Regulatory protein E2 (488 aa).

Residues 1 to 201 (MEALNARFNV…ETVFAPVTSS (201 aa)) are transactivation domain. The span at 196-215 (APVTSSTPPSTGLRESSNAS) shows a compositional bias: polar residues. Residues 196 to 384 (APVTSSTPPS…ISPDKVGSRV (189 aa)) are disordered. The span at 224–245 (TPTSTTATTTTFSTTTATATAT) shows a compositional bias: low complexity. 2 stretches are compositionally biased toward basic residues: residues 278 to 291 (VSRR…RTRR) and 301 to 311 (KASRSRSRSRS). A compositionally biased stretch (low complexity) spans 312–328 (TSRGSRGSGGSVTTSRD). The segment covering 332 to 346 (KRTRRGRGRGGRSRR) has biased composition (basic residues). Residues 404-488 (DPPVILLRGD…EWSFGNFDKL (85 aa)) form a DNA-binding domain region.

Belongs to the papillomaviridae E2 protein family. As to quaternary structure, binds DNA as homodimer. Interacts with protein E1; this interaction greatly increases E1 DNA-binding activity. Interacts with protein L1; this interaction enhances E2-dependent replication and transcription activation. Interacts with protein L2; this interaction inhibits E2 transcriptional activity but not DNA replication function E2. Interacts with protein E7; this interaction inhibits E7 oncogenic activity. Interacts with host TAF1; this interaction modulates E2-dependent transcriptional regulation. Interacts with host BRD4; this interaction mediates E2 transcriptional activation function. Additionally, the interaction with host BRD4 on mitotic chromosomes mediates tethering of the viral genome. Interacts with host TOPBP1; this interaction is required for optimal viral DNA replication. Phosphorylated.

Its subcellular location is the host nucleus. Plays a role in the initiation of viral DNA replication. A dimer of E2 interacts with a dimer of E1 in order to improve specificity of E1 DNA binding activity. Once the complex recognizes and binds DNA at specific sites, the E2 dimer is removed from DNA. E2 also regulates viral transcription through binding to the E2RE response element (5'-ACCNNNNNNGGT-3') present in multiple copies in the regulatory regions of the viral genome. Activates or represses transcription depending on E2RE's position with regards to proximal promoter elements including the TATA-box. Repression occurs by sterically hindering the assembly of the transcription initiation complex. The sequence is that of Regulatory protein E2 from Homo sapiens (Human).